A 301-amino-acid polypeptide reads, in one-letter code: Glycine--tRNA ligase alpha subunit (301 aa).

The protein belongs to the class-II aminoacyl-tRNA synthetase family. In terms of assembly, tetramer of two alpha and two beta subunits.

Its subcellular location is the cytoplasm. It carries out the reaction tRNA(Gly) + glycine + ATP = glycyl-tRNA(Gly) + AMP + diphosphate. The polypeptide is Glycine--tRNA ligase alpha subunit (Shewanella denitrificans (strain OS217 / ATCC BAA-1090 / DSM 15013)).